A 237-amino-acid chain; its full sequence is MNNLINIKEVEAKLKFTFTQPQLLVTALTHPSYRNETVTITEDSERLEFLGDAVLCLIVTEHLFLLFPSMDEGTLSTARAALINAVSCCQYTDALGLGEYLLIGKGERIQNERGRTSAYANLFEAILGAVYLDGGLAPARQITVPLLPSKKDILPLMLGNPKNRLQQLTQKQLRTLPVYQSTPWISPQGAPGYHIRVIVNDEIWGEGFALSKKEAEKLAAQEALDANDYKDKNTVDL.

The 129-residue stretch at 7–135 (IKEVEAKLKF…ILGAVYLDGG (129 aa)) folds into the RNase III domain. A Mg(2+)-binding site is contributed by Glu-48. Asp-52 is an active-site residue. Residues Asn-121 and Glu-124 each coordinate Mg(2+). Glu-124 is a catalytic residue. Positions 160–229 (NPKNRLQQLT…AQEALDANDY (70 aa)) constitute a DRBM domain.

Belongs to the ribonuclease III family. In terms of assembly, homodimer. Mg(2+) is required as a cofactor.

The protein localises to the cytoplasm. It catalyses the reaction Endonucleolytic cleavage to 5'-phosphomonoester.. Digests double-stranded RNA. Involved in the processing of primary rRNA transcript to yield the immediate precursors to the large and small rRNAs (23S and 16S). Processes some mRNAs, and tRNAs when they are encoded in the rRNA operon. Processes pre-crRNA and tracrRNA of type II CRISPR loci if present in the organism. The sequence is that of Ribonuclease 3 from Chlamydia felis (strain Fe/C-56) (Chlamydophila felis).